The primary structure comprises 245 residues: Probable octanoyltransferase 2 (245 aa).

A BPL/LPL catalytic domain is found at 38-227 (MEYKPVLYFQ…SIEKEFDIKE (190 aa)). Residues 89–96 (RGGYETYH), 157–159 (SIG), and 170–172 (GMA) contribute to the substrate site. Cys-188 (acyl-thioester intermediate) is an active-site residue.

The protein belongs to the LipB family.

It is found in the cytoplasm. It carries out the reaction octanoyl-[ACP] + L-lysyl-[protein] = N(6)-octanoyl-L-lysyl-[protein] + holo-[ACP] + H(+). It functions in the pathway protein modification; protein lipoylation via endogenous pathway; protein N(6)-(lipoyl)lysine from octanoyl-[acyl-carrier-protein]: step 1/2. Functionally, catalyzes the transfer of endogenously produced octanoic acid from octanoyl-acyl-carrier-protein onto the lipoyl domains of lipoate-dependent enzymes. Lipoyl-ACP can also act as a substrate although octanoyl-ACP is likely to be the physiological substrate. The polypeptide is Probable octanoyltransferase 2 (Picrophilus torridus (strain ATCC 700027 / DSM 9790 / JCM 10055 / NBRC 100828 / KAW 2/3)).